A 361-amino-acid polypeptide reads, in one-letter code: GTP 3',8-cyclase (361 aa).

Residues 1–30 are disordered; the sequence is MTVTALGLPTVARSTGDGSAGASPAPADGP. Low complexity predominate over residues 16–30; sequence GDGSAGASPAPADGP. Residues 34 to 252 enclose the Radical SAM core domain; sequence TYGRAATDLR…LQQHFELTPD (219 aa). Position 43 (Arg-43) interacts with GTP. 2 residues coordinate [4Fe-4S] cluster: Cys-50 and Cys-54. S-adenosyl-L-methionine is bound at residue Tyr-56. Cys-57 contacts [4Fe-4S] cluster. A GTP-binding site is contributed by Arg-94. Residue Gly-98 participates in S-adenosyl-L-methionine binding. Residue Thr-125 coordinates GTP. Ser-149 contributes to the S-adenosyl-L-methionine binding site. Lys-186 provides a ligand contact to GTP. Met-220 serves as a coordination point for S-adenosyl-L-methionine. [4Fe-4S] cluster is bound by residues Cys-288 and Cys-291. Position 293–295 (293–295) interacts with GTP; that stretch reads RTR. [4Fe-4S] cluster is bound at residue Cys-305.

The protein belongs to the radical SAM superfamily. MoaA family. In terms of assembly, monomer and homodimer. The cofactor is [4Fe-4S] cluster.

The enzyme catalyses GTP + AH2 + S-adenosyl-L-methionine = (8S)-3',8-cyclo-7,8-dihydroguanosine 5'-triphosphate + 5'-deoxyadenosine + L-methionine + A + H(+). It participates in cofactor biosynthesis; molybdopterin biosynthesis. Its function is as follows. Catalyzes the cyclization of GTP to (8S)-3',8-cyclo-7,8-dihydroguanosine 5'-triphosphate. This is GTP 3',8-cyclase from Mycolicibacterium smegmatis (strain ATCC 700084 / mc(2)155) (Mycobacterium smegmatis).